Here is a 634-residue protein sequence, read N- to C-terminus: DNA-directed RNA polymerase subunit gamma (634 aa).

The Zn(2+) site is built by cysteine 74, cysteine 76, cysteine 89, and cysteine 92. Residues aspartate 471, aspartate 473, and aspartate 475 each contribute to the Mg(2+) site.

The protein belongs to the RNA polymerase beta' chain family. RpoC1 subfamily. In cyanobacteria the RNAP catalytic core is composed of 2 alpha, 1 beta, 1 beta', 1 gamma and 1 omega subunit. When a sigma factor is associated with the core the holoenzyme is formed, which can initiate transcription. The cofactor is Mg(2+). It depends on Zn(2+) as a cofactor.

The enzyme catalyses RNA(n) + a ribonucleoside 5'-triphosphate = RNA(n+1) + diphosphate. Functionally, DNA-dependent RNA polymerase catalyzes the transcription of DNA into RNA using the four ribonucleoside triphosphates as substrates. In Prochlorococcus marinus (strain MIT 9515), this protein is DNA-directed RNA polymerase subunit gamma.